The following is an 873-amino-acid chain: Bifunctional levopimaradiene synthase, chloroplastic (873 aa).

Residues Met-1–His-59 constitute a chloroplast transit peptide. A substrate-binding site is contributed by Lys-271. Positions 405 and 407 each coordinate Mg(2+). The short motif at Asp-405 to Asp-408 is the DXDD motif element. Residue Lys-492 participates in substrate binding. Positions 624, 628, 769, 773, and 777 each coordinate Mg(2+). Residues Asp-624–Asp-628 carry the DDXXD motif motif.

Belongs to the terpene synthase family. Tpsd subfamily. It depends on Mg(2+) as a cofactor. As to expression, expressed in roots.

It localises to the plastid. The protein resides in the chloroplast. It catalyses the reaction (2E,6E,10E)-geranylgeranyl diphosphate = (+)-copalyl diphosphate. The enzyme catalyses (+)-copalyl diphosphate = abieta-8(14),12-diene + diphosphate. It participates in terpene metabolism; ginkgolide biosynthesis. In terms of biological role, catalyzes the initial cyclization step in the biosynthesis of ginkgolides, a structurally unique family of diterpenoids that are highly specific platelet-activating-factor receptor antagonists. Bifunctional enzyme that catalyzes two sequential cyclizations of geranylgeranyl diphosphate (GGPP) to levopimaradiene. In Ginkgo biloba (Ginkgo), this protein is Bifunctional levopimaradiene synthase, chloroplastic (LPS).